Consider the following 418-residue polypeptide: Gamma-glutamyl phosphate reductase (418 aa).

Belongs to the gamma-glutamyl phosphate reductase family.

It localises to the cytoplasm. It catalyses the reaction L-glutamate 5-semialdehyde + phosphate + NADP(+) = L-glutamyl 5-phosphate + NADPH + H(+). The protein operates within amino-acid biosynthesis; L-proline biosynthesis; L-glutamate 5-semialdehyde from L-glutamate: step 2/2. Its function is as follows. Catalyzes the NADPH-dependent reduction of L-glutamate 5-phosphate into L-glutamate 5-semialdehyde and phosphate. The product spontaneously undergoes cyclization to form 1-pyrroline-5-carboxylate. The polypeptide is Gamma-glutamyl phosphate reductase (Desulfosudis oleivorans (strain DSM 6200 / JCM 39069 / Hxd3) (Desulfococcus oleovorans)).